A 305-amino-acid chain; its full sequence is MLDTSIQALINKWQKYLVLQRNYSNHTVISYNNDLKHFLEFMNYYNSELVTINHIKTADIRLIRSWLAKRNCDNFTASSISRGLSAVKNFYRFLEKTTQLNSHIIFSIKSPKKTKLLPKALSEDDVVISLEHIEEYGNVKWIELRNKALLVLIYASGLRISEALSITKLHLQNLEFIRIIGKGSKERIIPWLPIAKNLITQYLEILPYKLGDNEPIFRGKQGKKLQPPVFNRELIKLKHFYGLPQHLTAHSFRHSFASHLLEHGADLRSLQELLGHKSLSTTQSYTKTSIKHLEAVYTTAYPIKK.

The region spanning 4–95 (TSIQALINKW…AVKNFYRFLE (92 aa)) is the Core-binding (CB) domain. The region spanning 116 to 298 (LLPKALSEDD…SIKHLEAVYT (183 aa)) is the Tyr recombinase domain. Active-site residues include R159, K182, H250, R253, and H276. Y285 serves as the catalytic O-(3'-phospho-DNA)-tyrosine intermediate.

It belongs to the 'phage' integrase family. XerC subfamily. As to quaternary structure, forms a cyclic heterotetrameric complex composed of two molecules of XerC and two molecules of XerD.

The protein localises to the cytoplasm. Functionally, site-specific tyrosine recombinase, which acts by catalyzing the cutting and rejoining of the recombining DNA molecules. The XerC-XerD complex is essential to convert dimers of the bacterial chromosome into monomers to permit their segregation at cell division. It also contributes to the segregational stability of plasmids. The polypeptide is Tyrosine recombinase XerC (Rickettsia africae (strain ESF-5)).